The sequence spans 550 residues: Glucose-6-phosphate isomerase 2 (550 aa).

Glutamate 357 serves as the catalytic Proton donor. Catalysis depends on residues histidine 388 and lysine 514. A disordered region spans residues 527 to 550 (DTGALGHDSSTNGLIRHYRERHGK).

This sequence belongs to the GPI family.

The protein resides in the cytoplasm. It catalyses the reaction alpha-D-glucose 6-phosphate = beta-D-fructose 6-phosphate. It functions in the pathway carbohydrate biosynthesis; gluconeogenesis. The protein operates within carbohydrate degradation; glycolysis; D-glyceraldehyde 3-phosphate and glycerone phosphate from D-glucose: step 2/4. In terms of biological role, catalyzes the reversible isomerization of glucose-6-phosphate to fructose-6-phosphate. The sequence is that of Glucose-6-phosphate isomerase 2 from Chromobacterium violaceum (strain ATCC 12472 / DSM 30191 / JCM 1249 / CCUG 213 / NBRC 12614 / NCIMB 9131 / NCTC 9757 / MK).